We begin with the raw amino-acid sequence, 315 residues long: Methionyl-tRNA formyltransferase (315 aa).

Residue 112–115 participates in (6S)-5,6,7,8-tetrahydrofolate binding; that stretch reads SLLP.

Belongs to the Fmt family.

It catalyses the reaction L-methionyl-tRNA(fMet) + (6R)-10-formyltetrahydrofolate = N-formyl-L-methionyl-tRNA(fMet) + (6S)-5,6,7,8-tetrahydrofolate + H(+). Functionally, attaches a formyl group to the free amino group of methionyl-tRNA(fMet). The formyl group appears to play a dual role in the initiator identity of N-formylmethionyl-tRNA by promoting its recognition by IF2 and preventing the misappropriation of this tRNA by the elongation apparatus. The sequence is that of Methionyl-tRNA formyltransferase from Leptospira interrogans serogroup Icterohaemorrhagiae serovar copenhageni (strain Fiocruz L1-130).